Reading from the N-terminus, the 33-residue chain is AVPCGQVSSALSPCMSYLTGGGDDPEARCCAGV.

Cysteines 14 and 29 form a disulfide.

This sequence belongs to the plant LTP family. In terms of assembly, dimer.

Functionally, plant non-specific lipid-transfer proteins transfer phospholipids as well as galactolipids across membranes. May play a role in wax or cutin deposition in the cell walls of expanding epidermal cells and certain secretory tissues. Has antibacterial activity against Gram-positive bacteria S.aureus and S.epidermidis and blocks biofilm formation. In a mouse model, also protects against bacterial sepsis and has an anti-inflammatory effect. Exhibits antinociceptive activity upon oral or intraperitoneal application in mice. In Morinda citrifolia (Indian mulberry), this protein is Non-specific lipid-transfer protein.